Consider the following 72-residue polypeptide: Translation initiation factor IF-1 (72 aa).

An S1-like domain is found at 1–72; sequence MAKEEPIEVE…TRGRIIYRTK (72 aa).

It belongs to the IF-1 family. As to quaternary structure, component of the 30S ribosomal translation pre-initiation complex which assembles on the 30S ribosome in the order IF-2 and IF-3, IF-1 and N-formylmethionyl-tRNA(fMet); mRNA recruitment can occur at any time during PIC assembly.

It is found in the cytoplasm. Functionally, one of the essential components for the initiation of protein synthesis. Stabilizes the binding of IF-2 and IF-3 on the 30S subunit to which N-formylmethionyl-tRNA(fMet) subsequently binds. Helps modulate mRNA selection, yielding the 30S pre-initiation complex (PIC). Upon addition of the 50S ribosomal subunit IF-1, IF-2 and IF-3 are released leaving the mature 70S translation initiation complex. The chain is Translation initiation factor IF-1 from Syntrophus aciditrophicus (strain SB).